Reading from the N-terminus, the 190-residue chain is Elongation factor P-like protein (190 aa).

The protein belongs to the elongation factor P family.

This chain is Elongation factor P-like protein, found in Citrobacter koseri (strain ATCC BAA-895 / CDC 4225-83 / SGSC4696).